We begin with the raw amino-acid sequence, 129 residues long: MTPLDVMWVGLGGGVGSLGRWWIGRIVGEYHHGAFPLGTFLINISGAFVIGYLSVLFGVDWHDRYGTMLNAGVLTGILGGYTTFSSMQLDAVKLSHKGQGGLAVFYLVASVLSGLFAAWLDAMLAHLQG.

Transmembrane regions (helical) follow at residues Leu4–Gly24, Thr39–Val59, Tyr65–Ser85, and Gly100–Leu120. Gly79 and Thr82 together coordinate Na(+).

It belongs to the fluoride channel Fluc/FEX (TC 1.A.43) family.

It is found in the cell inner membrane. The enzyme catalyses fluoride(in) = fluoride(out). Na(+) is not transported, but it plays an essential structural role and its presence is essential for fluoride channel function. In terms of biological role, fluoride-specific ion channel. Important for reducing fluoride concentration in the cell, thus reducing its toxicity. The sequence is that of Fluoride-specific ion channel FluC 2 from Brucella suis biovar 1 (strain 1330).